The following is a 166-amino-acid chain: Interferon gamma (166 aa).

A signal peptide spans 1–23 (MKYTSYILAFQLCIVLGSLGCYC). Pyrrolidone carboxylic acid is present on Q24. N-linked (GlcNAc...) asparagine glycosylation is present at N48. Residue N120 is glycosylated (N-linked (GlcNAc...) asparagine; in dimeric form). A disordered region spans residues 147–166 (AKTGKRKRSQMLFRGRRASQ). The segment covering 149-166 (TGKRKRSQMLFRGRRASQ) has biased composition (basic residues). The propeptide occupies 162-166 (RRASQ).

It belongs to the type II (or gamma) interferon family. In terms of assembly, homodimer. Interacts with IFNGR1 (via extracellular domain); this interaction promotes IFNGR1 dimerization. Proteolytic processing produces C-terminal heterogeneity, with proteins ending alternatively at Gly-150, Met-157 or Gly-161. In terms of tissue distribution, released primarily from activated T lymphocytes.

The protein localises to the secreted. Functionally, type II interferon produced by immune cells such as T-cells and NK cells that plays crucial roles in antimicrobial, antiviral, and antitumor responses by activating effector immune cells and enhancing antigen presentation. Primarily signals through the JAK-STAT pathway after interaction with its receptor IFNGR1 to affect gene regulation. Upon IFNG binding, IFNGR1 intracellular domain opens out to allow association of downstream signaling components JAK2, JAK1 and STAT1, leading to STAT1 activation, nuclear translocation and transcription of IFNG-regulated genes. Many of the induced genes are transcription factors such as IRF1 that are able to further drive regulation of a next wave of transcription. Plays a role in class I antigen presentation pathway by inducing a replacement of catalytic proteasome subunits with immunoproteasome subunits. In turn, increases the quantity, quality, and repertoire of peptides for class I MHC loading. Increases the efficiency of peptide generation also by inducing the expression of activator PA28 that associates with the proteasome and alters its proteolytic cleavage preference. Up-regulates as well MHC II complexes on the cell surface by promoting expression of several key molecules such as cathepsins B/CTSB, H/CTSH, and L/CTSL. Participates in the regulation of hematopoietic stem cells during development and under homeostatic conditions by affecting their development, quiescence, and differentiation. In Homo sapiens (Human), this protein is Interferon gamma (IFNG).